The following is a 164-amino-acid chain: Peptidyl-prolyl cis-trans isomerase B (164 aa).

Residues 1–162 (MVTFHTNHGD…EDVIIESVTV (162 aa)) form the PPIase cyclophilin-type domain.

The protein belongs to the cyclophilin-type PPIase family.

It is found in the cytoplasm. It carries out the reaction [protein]-peptidylproline (omega=180) = [protein]-peptidylproline (omega=0). Its activity is regulated as follows. Inhibition by cyclosporin A with a Ki of 25 to 50 mu-mol, a concentration 1000-fold higher than that required for eukaryotic PPIases. In terms of biological role, PPIases accelerate the folding of proteins. It catalyzes the cis-trans isomerization of proline imidic peptide bonds in oligopeptides. The sequence is that of Peptidyl-prolyl cis-trans isomerase B (ppiB) from Escherichia coli (strain K12).